The chain runs to 557 residues: Probable asparagine synthetase [glutamine-hydrolyzing] (557 aa).

The active-site For GATase activity is the cysteine 2. Residues 2–188 (CGILAVHHVA…PGHYYDSETK (187 aa)) enclose the Glutamine amidotransferase type-2 domain. Residues 50-54 (RLAIV), 75-77 (NGE), and aspartate 99 contribute to the L-glutamine site. The Asparagine synthetase domain occupies 196–531 (PSWWDENKIP…PRQCADTVMR (336 aa)). ATP-binding positions include leucine 235, isoleucine 280, and 354–355 (SG). Phosphoserine is present on residues serine 391 and serine 489.

It is found in the cytoplasm. Its subcellular location is the nucleus. It carries out the reaction L-aspartate + L-glutamine + ATP + H2O = L-asparagine + L-glutamate + AMP + diphosphate + H(+). Its pathway is amino-acid biosynthesis; L-asparagine biosynthesis; L-asparagine from L-aspartate (L-Gln route): step 1/1. The polypeptide is Probable asparagine synthetase [glutamine-hydrolyzing] (asn1) (Schizosaccharomyces pombe (strain 972 / ATCC 24843) (Fission yeast)).